Consider the following 609-residue polypeptide: Neutral protease (609 aa).

An N-terminal signal peptide occupies residues 1-24 (MNKTQRHINWLLAVSAATALPVTA). The propeptide occupies 25–196 (AEMINVNDGS…VLQTWDGLNH (172 aa)). Residue histidine 343 coordinates Zn(2+). Residue glutamate 344 is part of the active site. 2 residues coordinate Zn(2+): histidine 347 and glutamate 367. Histidine 426 (proton donor) is an active-site residue.

This sequence belongs to the peptidase M4 family. Zn(2+) is required as a cofactor.

It is found in the secreted. The catalysed reaction is Preferential cleavage of bonds with bulky hydrophobic groups in P2 and P1'. Phe at P1' is the most favored residue, which distinguished this enzyme from thermolysin.. Its function is as follows. Extracellular zinc metalloprotease. This is Neutral protease (nprV) from Vibrio proteolyticus (Aeromonas proteolytica).